A 150-amino-acid polypeptide reads, in one-letter code: Endoribonuclease YbeY (150 aa).

Residues His-112, His-116, and His-122 each contribute to the Zn(2+) site.

It belongs to the endoribonuclease YbeY family. Zn(2+) serves as cofactor.

It localises to the cytoplasm. Single strand-specific metallo-endoribonuclease involved in late-stage 70S ribosome quality control and in maturation of the 3' terminus of the 16S rRNA. The protein is Endoribonuclease YbeY of Geobacter metallireducens (strain ATCC 53774 / DSM 7210 / GS-15).